The primary structure comprises 269 residues: Myelin protein zero-like protein 1 (269 aa).

A signal peptide spans 1–35 (MAASAGAGAVIAAPDSRRWLWSVLAAALGLLTAGV). One can recognise an Ig-like V-type domain in the interval 36–146 (SALEVYTPKE…VKNPPDIVVQ (111 aa)). Residues 36–162 (SALEVYTPKE…YVVEKENLPV (127 aa)) lie on the Extracellular side of the membrane. N-linked (GlcNAc...) asparagine glycosylation is found at Asn50 and Asn130. A disulfide bond links Cys58 and Cys135. Residues 163 to 183 (FPVWVVVGIVTAVVLGLTLLI) traverse the membrane as a helical segment. The Cytoplasmic portion of the chain corresponds to 184–269 (SMILAVLYRR…SVVYADIRKN (86 aa)). Residues 199-238 (DYTGCSTSESLSPVKQAPRKSPSDTEGLVKSLPSGSHQGP) are disordered. Polar residues predominate over residues 202 to 211 (GCSTSESLSP). Phosphoserine occurs at positions 204, 206, 208, 210, 219, and 221. Residues 239 to 244 (VIYAQL) carry the ITIM motif 1 motif. A Phosphotyrosine modification is found at Tyr241. Ser260 carries the phosphoserine modification. The ITIM motif 2 signature appears at 261–266 (VVYADI). A Phosphotyrosine modification is found at Tyr263.

It belongs to the myelin P0 protein family. As to quaternary structure, interacts with phosphorylated PTPN11/SHP-2. Post-translationally, phosphorylated on tyrosine residues upon stimulation with pervanadate and concanavalin-A (ConA). Phosphorylation at Tyr-241 and Tyr-263 is required for interaction with PTPN11/SHP-2. Dephosphorylated by PTPN11/SHP-2 (in vitro). In terms of processing, N-glycosylated. N-glycosylation is required for concanavalin A binding. As to expression, widely expressed with highest levels in heart, placenta, kidney and pancreas. Isoform 3 is relatively abundant in hematopoietic tissues and fetal liver. Isoform 1 and isoform 3 are expressed in CD14- PB monocytes and pre-B cell progenitors. Isoform 3 appears to be the major isoform in CD34- promyelocytic and promonocytic cells. During differentiation in monocytic cells, the expression level of isoform 3 decreases and that of isoform 1 increases. Isoform 1 is prominent in stromal cells and, to a lesser extent, in umbilical vein endothelial cells and erythroid progenitors. Isoform 2 is expressed in a erythroid progenitor cell line.

The protein localises to the membrane. Its function is as follows. Cell surface receptor, which is involved in signal transduction processes. Recruits PTPN11/SHP-2 to the cell membrane and is a putative substrate of PTPN11/SHP-2. Is a major receptor for concanavalin-A (ConA) and is involved in cellular signaling induced by ConA, which probably includes Src family tyrosine-protein kinases. Isoform 3 seems to have a dominant negative role; it blocks tyrosine phosphorylation of MPZL1 induced by ConA. Isoform 1, but not isoform 2 and isoform 3, may be involved in regulation of integrin-mediated cell motility. The chain is Myelin protein zero-like protein 1 (MPZL1) from Homo sapiens (Human).